A 721-amino-acid polypeptide reads, in one-letter code: MDGKVGNTATGCPVIHGGMTSAETSNTAWWPNALNLDILHQHDTKTNPMGKDFNYREEVKKLDFVAFKKDLHALMTDSQAWWPADWGHYGGLMIRMSWHAAGSYRVADGRGGAGTGNQRFAPLNSWPDNVNLDKARRLLWPIKKKYGNKISWADLIVLAGTIAYESMGLKTFGFGFGREDIWHPEKDVYWGSEQEWLGAKRYDDKDRQSLETPLAAVQMGLIYVNPEGVNGQPDPLRTAQDVRVTFGRMAMNDEETVALTAGGHTVGKCHGNGNAKFLGPEPEAADIEDQGLGWINKTTRGIGRNTVSSGIEGAWTTHPTQWDNGYFYLLLNYDWELKKSPAGAWQWEPIHIKEEDKPVDVEDPAIRHNPIMTDADMAIKMDPVYRKIAERFYKDPDYFAEVFARAWFKLTHRDMGPKTRYIGPDVPKEDLIWQDPVPSGNRAYDIAAAKAKIAASNLTIGEMVSTAWDSARTFRGSDKRGGANGARIRLKPQKDWEGNEPQRLTKVLRILEGIAADTGASVADVIVLAGNVGIEKAAKAAGFDIIVPFAPGRGDATDDMTDAESFDVLEPLHDGYRNWLKKAYDVRPEELMLDRTQLMGLTAHEMTVLVGGLRVLGTNHNNTQHGVFTDRVGVLTNDFFVNLTDMANVWIPSKDNLYEIRDRKAGNIKWTATRVDLVFGSNSILRSYAEVYAQDDNKGKFIQDFVAAWTKVMNADRFDLA.

The tryptophyl-tyrosyl-methioninium (Trp-Tyr) (with M-249) cross-link spans 98–223; that stretch reads WHAAGSYRVA…LAAVQMGLIY (126 aa). His99 functions as the Proton acceptor in the catalytic mechanism. Positions 223-249 form a cross-link, tryptophyl-tyrosyl-methioninium (Tyr-Met) (with W-98); that stretch reads YVNPEGVNGQPDPLRTAQDVRVTFGRM. Position 264 (His264) interacts with heme b.

This sequence belongs to the peroxidase family. Peroxidase/catalase subfamily. In terms of assembly, homodimer or homotetramer. Requires heme b as cofactor. Post-translationally, formation of the three residue Trp-Tyr-Met cross-link is important for the catalase, but not the peroxidase activity of the enzyme.

The enzyme catalyses H2O2 + AH2 = A + 2 H2O. It catalyses the reaction 2 H2O2 = O2 + 2 H2O. Bifunctional enzyme with both catalase and broad-spectrum peroxidase activity. The polypeptide is Catalase-peroxidase 1 (Legionella pneumophila (strain Paris)).